The chain runs to 998 residues: Kinesin-like protein KIF19 (998 aa).

The region spanning 11–346 is the Kinesin motor domain; sequence QLMVALRVRP…LTYAGRAKNI (336 aa). 104-111 is an ATP binding site; sequence GPTGCGKT. Coiled coils occupy residues 360-391 and 424-452; these read HIAQYTSIIADLRGEIQRLKRKIDEQTGRGQA and EQLASAFQEQMDVRRRLLELENRAMEVQI. Residues 482–494 show a composition bias toward basic and acidic residues; sequence ECYAKDDSEKDSD. The segment at 482-503 is disordered; sequence ECYAKDDSEKDSDTGDDQPDIL. A coiled-coil region spans residues 507–552; it reads EVAAARESIAALVDEQKQLRKQKLALEQRCRELRARGRRLEETLPR. Polar residues-rich tracts occupy residues 662–676, 684–697, 746–761, and 836–852; these read SSLPKITPAGTSLTP, KTLSSDAQHLQNSA, SLGSWINSSPDSSENL, and TLQHAASEDNLSSSTGE. Disordered stretches follow at residues 662 to 706, 746 to 765, 794 to 911, and 948 to 998; these read SSLP…TESE, SLGSWINSSPDSSENLSEIP, GTEG…THLL, and KLPP…SRHN. Residues 989 to 998 show a composition bias toward basic and acidic residues; sequence HGKDGCSRHN.

It belongs to the TRAFAC class myosin-kinesin ATPase superfamily. Kinesin family.

The protein localises to the cytoplasm. Its subcellular location is the cytoskeleton. The protein resides in the cell projection. It localises to the cilium. In terms of biological role, plus end-directed microtubule-dependent motor protein that regulates the length of motile cilia by mediating depolymerization of microtubules at ciliary tips. This chain is Kinesin-like protein KIF19 (KIF19), found in Homo sapiens (Human).